The sequence spans 509 residues: Probable cytochrome P450 4ac1 (509 aa).

Heme-binding residues include glutamate 317 and cysteine 454.

Belongs to the cytochrome P450 family. Heme is required as a cofactor.

The protein localises to the endoplasmic reticulum membrane. It localises to the microsome membrane. In terms of biological role, may be involved in the metabolism of insect hormones and in the breakdown of synthetic insecticides. The sequence is that of Probable cytochrome P450 4ac1 (Cyp4ac1) from Drosophila melanogaster (Fruit fly).